The primary structure comprises 310 residues: Ribosomal RNA small subunit methyltransferase H (310 aa).

S-adenosyl-L-methionine contacts are provided by residues 47–49 (GGH), aspartate 66, phenylalanine 93, aspartate 108, and glutamine 115. Residues 275–310 (RKPFMASEQEQADNPRSRSAKLRIARRRPDTARSGP) form a disordered region. Residues 301–310 (RRPDTARSGP) show a composition bias toward basic and acidic residues.

It belongs to the methyltransferase superfamily. RsmH family.

The protein resides in the cytoplasm. The enzyme catalyses cytidine(1402) in 16S rRNA + S-adenosyl-L-methionine = N(4)-methylcytidine(1402) in 16S rRNA + S-adenosyl-L-homocysteine + H(+). In terms of biological role, specifically methylates the N4 position of cytidine in position 1402 (C1402) of 16S rRNA. In Synechococcus sp. (strain CC9311), this protein is Ribosomal RNA small subunit methyltransferase H.